The sequence spans 643 residues: Threonine--tRNA ligase (643 aa).

A TGS domain is found at 1-61 (MPIITLPDGS…SEDATLEIIT (61 aa)). The interval 243–534 (DHRKIGKALD…ITEEYAGFFP (292 aa)) is catalytic. Zn(2+) is bound by residues Cys-334, His-385, and His-511.

This sequence belongs to the class-II aminoacyl-tRNA synthetase family. Homodimer. Zn(2+) is required as a cofactor.

It is found in the cytoplasm. It catalyses the reaction tRNA(Thr) + L-threonine + ATP = L-threonyl-tRNA(Thr) + AMP + diphosphate + H(+). In terms of biological role, catalyzes the attachment of threonine to tRNA(Thr) in a two-step reaction: L-threonine is first activated by ATP to form Thr-AMP and then transferred to the acceptor end of tRNA(Thr). Also edits incorrectly charged L-seryl-tRNA(Thr). The polypeptide is Threonine--tRNA ligase (Glaesserella parasuis serovar 5 (strain SH0165) (Haemophilus parasuis)).